A 907-amino-acid chain; its full sequence is Coatomer subunit beta'-1 (907 aa).

9 WD repeats span residues 13–52 (QRSE…MVKS), 55–94 (VSEL…KVKV), 97–136 (AHTD…MCTQ), 140–180 (GHSH…PNFT), 183–224 (GHQK…CVQT), 227–266 (GHTH…LENT), 269–309 (YGLE…ASMD), 351–389 (SCDL…NRSF), and 461–501 (RIDV…SYLE). Acidic residues-rich tracts occupy residues 850-866 (ETED…EEVL) and 874-887 (STDE…DEPE). The interval 850–887 (ETEDALDENGEPDEEVLEENKVEESTDEAVEVDADEPE) is disordered.

It belongs to the WD repeat COPB2 family. As to quaternary structure, oligomeric complex that consists of at least the alpha, beta, beta', gamma, delta, epsilon and zeta subunits.

It localises to the cytoplasm. It is found in the golgi apparatus membrane. Its subcellular location is the cytoplasmic vesicle. The protein resides in the COPI-coated vesicle membrane. Its function is as follows. The coatomer is a cytosolic protein complex that binds to dilysine motifs and reversibly associates with Golgi non-clathrin-coated vesicles, which further mediate biosynthetic protein transport from the ER, via the Golgi up to the trans Golgi network. Coatomer complex is required for budding from Golgi membranes, and is essential for the retrograde Golgi-to-ER transport of dilysine-tagged proteins. The sequence is that of Coatomer subunit beta'-1 from Oryza sativa subsp. japonica (Rice).